A 431-amino-acid polypeptide reads, in one-letter code: Serine hydroxymethyltransferase (431 aa).

(6S)-5,6,7,8-tetrahydrofolate contacts are provided by residues leucine 126 and 130–132; that span reads GHL. Residue lysine 235 is modified to N6-(pyridoxal phosphate)lysine.

Belongs to the SHMT family. As to quaternary structure, homodimer. The cofactor is pyridoxal 5'-phosphate.

Its subcellular location is the cytoplasm. The enzyme catalyses (6R)-5,10-methylene-5,6,7,8-tetrahydrofolate + glycine + H2O = (6S)-5,6,7,8-tetrahydrofolate + L-serine. It functions in the pathway one-carbon metabolism; tetrahydrofolate interconversion. Its pathway is amino-acid biosynthesis; glycine biosynthesis; glycine from L-serine: step 1/1. In terms of biological role, catalyzes the reversible interconversion of serine and glycine with tetrahydrofolate (THF) serving as the one-carbon carrier. This reaction serves as the major source of one-carbon groups required for the biosynthesis of purines, thymidylate, methionine, and other important biomolecules. Also exhibits THF-independent aldolase activity toward beta-hydroxyamino acids, producing glycine and aldehydes, via a retro-aldol mechanism. The polypeptide is Serine hydroxymethyltransferase (Nocardia farcinica (strain IFM 10152)).